Reading from the N-terminus, the 372-residue chain is Flagellar P-ring protein (372 aa).

The signal sequence occupies residues 1–29 (MPARPIPVPAFALALALAAALAVPAPAAA).

It belongs to the FlgI family. The basal body constitutes a major portion of the flagellar organelle and consists of four rings (L,P,S, and M) mounted on a central rod.

The protein localises to the periplasm. It is found in the bacterial flagellum basal body. Assembles around the rod to form the L-ring and probably protects the motor/basal body from shearing forces during rotation. The sequence is that of Flagellar P-ring protein from Anaeromyxobacter dehalogenans (strain 2CP-1 / ATCC BAA-258).